A 62-amino-acid chain; its full sequence is Large ribosomal subunit protein eL37 (62 aa).

4 residues coordinate Zn(2+): cysteine 20, cysteine 23, cysteine 35, and cysteine 38. The C4-type zinc-finger motif lies at 20–38 (CRRCGRKAFNVKKGYCAAC).

The protein belongs to the eukaryotic ribosomal protein eL37 family. Zn(2+) is required as a cofactor.

Its function is as follows. Binds to the 23S rRNA. The chain is Large ribosomal subunit protein eL37 (rpl37e) from Pyrococcus abyssi (strain GE5 / Orsay).